A 217-amino-acid chain; its full sequence is Urease accessory protein UreF (217 aa).

It belongs to the UreF family. As to quaternary structure, ureD, UreF and UreG form a complex that acts as a GTP-hydrolysis-dependent molecular chaperone, activating the urease apoprotein by helping to assemble the nickel containing metallocenter of UreC. The UreE protein probably delivers the nickel.

The protein localises to the cytoplasm. Its function is as follows. Required for maturation of urease via the functional incorporation of the urease nickel metallocenter. This is Urease accessory protein UreF from Ruegeria pomeroyi (strain ATCC 700808 / DSM 15171 / DSS-3) (Silicibacter pomeroyi).